The chain runs to 277 residues: 3-methyl-2-oxobutanoate hydroxymethyltransferase (277 aa).

Mg(2+) is bound by residues Asp-43 and Asp-82. 3-methyl-2-oxobutanoate is bound by residues 43–44 (DS), Asp-82, and Lys-112. Glu-114 is a binding site for Mg(2+). Catalysis depends on Glu-181, which acts as the Proton acceptor.

Belongs to the PanB family. In terms of assembly, homodecamer; pentamer of dimers. It depends on Mg(2+) as a cofactor.

The protein localises to the cytoplasm. The enzyme catalyses 3-methyl-2-oxobutanoate + (6R)-5,10-methylene-5,6,7,8-tetrahydrofolate + H2O = 2-dehydropantoate + (6S)-5,6,7,8-tetrahydrofolate. The protein operates within cofactor biosynthesis; (R)-pantothenate biosynthesis; (R)-pantoate from 3-methyl-2-oxobutanoate: step 1/2. Functionally, catalyzes the reversible reaction in which hydroxymethyl group from 5,10-methylenetetrahydrofolate is transferred onto alpha-ketoisovalerate to form ketopantoate. This Exiguobacterium sp. (strain ATCC BAA-1283 / AT1b) protein is 3-methyl-2-oxobutanoate hydroxymethyltransferase.